The following is a 346-amino-acid chain: WD repeat-containing protein LWD1 (346 aa).

N-acetylmethionine is present on M1. WD repeat units lie at residues 79 to 121 (EHPY…SRVE), 133 to 173 (EFCG…VDTQ), 176 to 214 (AHDK…HSTI), and 265 to 305 (RHQA…QHVE).

Its subcellular location is the nucleus. Clock protein essential for the proper expression phase and period length of both the oscillator and output genes known to participate in photoperiod sensing. Required for the expression of APRR9, APRR7, and APRR5. Regulated by APRR9 and APRR7 at the transcriptional level, indicating the existence of a positive feedback loop within the circadian clock. May function to delay the expression of the morning genes until dawn approaches. This chain is WD repeat-containing protein LWD1 (LWD1), found in Arabidopsis thaliana (Mouse-ear cress).